A 396-amino-acid chain; its full sequence is Tryptophan synthase beta chain (396 aa).

K86 is subject to N6-(pyridoxal phosphate)lysine.

It belongs to the TrpB family. As to quaternary structure, tetramer of two alpha and two beta chains. Requires pyridoxal 5'-phosphate as cofactor.

The enzyme catalyses (1S,2R)-1-C-(indol-3-yl)glycerol 3-phosphate + L-serine = D-glyceraldehyde 3-phosphate + L-tryptophan + H2O. Its pathway is amino-acid biosynthesis; L-tryptophan biosynthesis; L-tryptophan from chorismate: step 5/5. Its function is as follows. The beta subunit is responsible for the synthesis of L-tryptophan from indole and L-serine. The protein is Tryptophan synthase beta chain of Vibrio atlanticus (strain LGP32) (Vibrio splendidus (strain Mel32)).